The sequence spans 543 residues: Mannuronan C5-epimerase (543 aa).

A signal peptide spans 1 to 35 (MPDISLSIPRRRLPRLRPLAAAVLGAVLLHGQAWA). PbH1 repeat units lie at residues 243 to 270 (GAEV…SISQ), 283 to 304 (RPKG…YCYE), 305 to 327 (ADDL…DPHD), 329 to 352 (SHRL…IVSR), 354 to 376 (VNDS…VLDR), 378 to 400 (SEGN…TLYE), and 401 to 423 (SGDN…RVRN). H326 functions as the Proton acceptor in the catalytic mechanism.

This sequence belongs to the D-mannuronate C5-epimerase family.

The protein resides in the periplasm. The enzyme catalyses [(1-&gt;4)-beta-D-mannuronosyl](n) = [alginate](n). It participates in glycan biosynthesis; alginate biosynthesis. Inhibited by the presence of acetyl groups on the substrate. Its function is as follows. Catalyzes the epimerization of beta-D-mannuronate to alpha-L-guluronate during the synthesis of the linear polysaccharide alginate. In addition, is part of a periplasmic protein complex that protects alginate from degradation by AlgL by channeling the newly formed alginate polymer through a scaffold that transfers the alginate polymer through the periplasmic space to the outer membrane secretin AlgE. The protein is Mannuronan C5-epimerase of Pseudomonas aeruginosa (strain ATCC 15692 / DSM 22644 / CIP 104116 / JCM 14847 / LMG 12228 / 1C / PRS 101 / PAO1).